The sequence spans 181 residues: Negative modulator of initiation of replication (181 aa).

3 interaction with DNA regions span residues 87–88, 116–120, and 150–156; these read AV, RTRVY, and NTNTGRK.

This sequence belongs to the SeqA family. In terms of assembly, homodimer. Polymerizes to form helical filaments.

The protein resides in the cytoplasm. Functionally, negative regulator of replication initiation, which contributes to regulation of DNA replication and ensures that replication initiation occurs exactly once per chromosome per cell cycle. Binds to pairs of hemimethylated GATC sequences in the oriC region, thus preventing assembly of replication proteins and re-initiation at newly replicated origins. Repression is relieved when the region becomes fully methylated. This is Negative modulator of initiation of replication from Shigella flexneri.